The following is a 68-amino-acid chain: U1-hexatoxin-Hv1a (68 aa).

5 cysteine pairs are disulfide-bonded: Cys3–Cys14, Cys8–Cys22, Cys13–Cys48, Cys32–Cys56, and Cys50–Cys63.

This sequence belongs to the MIT-like AcTx family. Expressed by the venom gland.

The protein resides in the secreted. In Hadronyche versuta (Blue mountains funnel-web spider), this protein is U1-hexatoxin-Hv1a.